The sequence spans 314 residues: Transcription factor DICHOTOMA (314 aa).

The TCP domain occupies 87 to 145; that stretch reads KKDRHSKINRPQGPRDRRVRLSIGIARKFFDLQEMLGFDKPSKTLDWLLTKSKEAIKEL. Positions 201–218 constitute a R domain; it reads KESRAKARARARERTKEK.

Its subcellular location is the nucleus. Transcription regulator involved in the dorsovental asymmetry of flowers. Promotes dorsal identity. The chain is Transcription factor DICHOTOMA (DICH) from Antirrhinum majus (Garden snapdragon).